The sequence spans 140 residues: Ribosome-binding factor A (140 aa).

Residues 1 to 13 (MQKKSSSKSHRAT) are compositionally biased toward basic residues. Residues 1–22 (MQKKSSSKSHRATRGPSQRQLR) form a disordered region.

The protein belongs to the RbfA family. Monomer. Binds 30S ribosomal subunits, but not 50S ribosomal subunits or 70S ribosomes.

The protein localises to the cytoplasm. Its function is as follows. One of several proteins that assist in the late maturation steps of the functional core of the 30S ribosomal subunit. Associates with free 30S ribosomal subunits (but not with 30S subunits that are part of 70S ribosomes or polysomes). Required for efficient processing of 16S rRNA. May interact with the 5'-terminal helix region of 16S rRNA. In Parvibaculum lavamentivorans (strain DS-1 / DSM 13023 / NCIMB 13966), this protein is Ribosome-binding factor A.